Consider the following 351-residue polypeptide: UDP-N-acetylglucosamine--N-acetylmuramyl-(pentapeptide) pyrophosphoryl-undecaprenol N-acetylglucosamine transferase (351 aa).

UDP-N-acetyl-alpha-D-glucosamine is bound by residues 13–15 (TGG), asparagine 125, arginine 161, serine 189, isoleucine 241, 260–265 (ALTVCE), and glutamine 285.

It belongs to the glycosyltransferase 28 family. MurG subfamily.

It is found in the cell inner membrane. It carries out the reaction di-trans,octa-cis-undecaprenyl diphospho-N-acetyl-alpha-D-muramoyl-L-alanyl-D-glutamyl-meso-2,6-diaminopimeloyl-D-alanyl-D-alanine + UDP-N-acetyl-alpha-D-glucosamine = di-trans,octa-cis-undecaprenyl diphospho-[N-acetyl-alpha-D-glucosaminyl-(1-&gt;4)]-N-acetyl-alpha-D-muramoyl-L-alanyl-D-glutamyl-meso-2,6-diaminopimeloyl-D-alanyl-D-alanine + UDP + H(+). The protein operates within cell wall biogenesis; peptidoglycan biosynthesis. Cell wall formation. Catalyzes the transfer of a GlcNAc subunit on undecaprenyl-pyrophosphoryl-MurNAc-pentapeptide (lipid intermediate I) to form undecaprenyl-pyrophosphoryl-MurNAc-(pentapeptide)GlcNAc (lipid intermediate II). This Haemophilus influenzae (strain ATCC 51907 / DSM 11121 / KW20 / Rd) protein is UDP-N-acetylglucosamine--N-acetylmuramyl-(pentapeptide) pyrophosphoryl-undecaprenol N-acetylglucosamine transferase.